The chain runs to 339 residues: Ketol-acid reductoisomerase (NADP(+)) (339 aa).

In terms of domain architecture, KARI N-terminal Rossmann spans 1–182 (MRVYYDRDAD…GGGRSGVIET (182 aa)). Residues 24–27 (YGSQ), Arg-48, Ser-51, Thr-53, and 83–86 (DELQ) each bind NADP(+). His-108 is an active-site residue. An NADP(+)-binding site is contributed by Gly-134. One can recognise a KARI C-terminal knotted domain in the interval 183-328 (TFKEECETDL…GKLRAMMPWI (146 aa)). Mg(2+) is bound by residues Asp-191, Glu-195, Glu-227, and Glu-231. A substrate-binding site is contributed by Ser-252.

The protein belongs to the ketol-acid reductoisomerase family. The cofactor is Mg(2+).

It catalyses the reaction (2R)-2,3-dihydroxy-3-methylbutanoate + NADP(+) = (2S)-2-acetolactate + NADPH + H(+). The enzyme catalyses (2R,3R)-2,3-dihydroxy-3-methylpentanoate + NADP(+) = (S)-2-ethyl-2-hydroxy-3-oxobutanoate + NADPH + H(+). Its pathway is amino-acid biosynthesis; L-isoleucine biosynthesis; L-isoleucine from 2-oxobutanoate: step 2/4. The protein operates within amino-acid biosynthesis; L-valine biosynthesis; L-valine from pyruvate: step 2/4. Its function is as follows. Involved in the biosynthesis of branched-chain amino acids (BCAA). Catalyzes an alkyl-migration followed by a ketol-acid reduction of (S)-2-acetolactate (S2AL) to yield (R)-2,3-dihydroxy-isovalerate. In the isomerase reaction, S2AL is rearranged via a Mg-dependent methyl migration to produce 3-hydroxy-3-methyl-2-ketobutyrate (HMKB). In the reductase reaction, this 2-ketoacid undergoes a metal-dependent reduction by NADPH to yield (R)-2,3-dihydroxy-isovalerate. The protein is Ketol-acid reductoisomerase (NADP(+)) of Brucella canis (strain ATCC 23365 / NCTC 10854 / RM-666).